The following is a 241-amino-acid chain: Adenosylcobinamide-GDP ribazoletransferase (241 aa).

7 helical membrane-spanning segments follow: residues 34–54 (RIPA…FTGS), 55–75 (FLSL…GFYL), 109–129 (VGPF…ELIT), 133–153 (PVAF…VLVF), 165–185 (MLFP…LPLL), 186–206 (LIDV…GFLI), and 221–241 (VLGG…NYLI).

It belongs to the CobS family. It depends on Mg(2+) as a cofactor.

It is found in the cell inner membrane. It carries out the reaction alpha-ribazole + adenosylcob(III)inamide-GDP = adenosylcob(III)alamin + GMP + H(+). It catalyses the reaction alpha-ribazole 5'-phosphate + adenosylcob(III)inamide-GDP = adenosylcob(III)alamin 5'-phosphate + GMP + H(+). It participates in cofactor biosynthesis; adenosylcobalamin biosynthesis; adenosylcobalamin from cob(II)yrinate a,c-diamide: step 7/7. Functionally, joins adenosylcobinamide-GDP and alpha-ribazole to generate adenosylcobalamin (Ado-cobalamin). Also synthesizes adenosylcobalamin 5'-phosphate from adenosylcobinamide-GDP and alpha-ribazole 5'-phosphate. This is Adenosylcobinamide-GDP ribazoletransferase from Fervidobacterium nodosum (strain ATCC 35602 / DSM 5306 / Rt17-B1).